We begin with the raw amino-acid sequence, 170 residues long: Translationally-controlled tumor protein homolog (170 aa).

A TCTP domain is found at 1–170 (MIIYKCIISG…FKDGLLAEKC (170 aa)).

This sequence belongs to the TCTP family.

Its subcellular location is the cytoplasm. Its function is as follows. Involved in calcium binding and microtubule stabilization. This is Translationally-controlled tumor protein homolog (tpt1) from Lateolabrax japonicus (Japanese sea perch).